The chain runs to 116 residues: MSATAATVPPAAPAGEGGPPAPPPNLTSNRRLQQTQAQVDEVVDIMRVNVDKVLERDQKLSELDDRADALQAGASQFETSAAKLKRKYWWKNLKMMIILGVICAIILIIIIVYFST.

Positions 1-28 (MSATAATVPPAAPAGEGGPPAPPPNLTS) are disordered. Serine 2 carries the post-translational modification N-acetylserine. Topologically, residues 2–94 (SATAATVPPA…KRKYWWKNLK (93 aa)) are cytoplasmic. Residues 31 to 91 (RLQQTQAQVD…AKLKRKYWWK (61 aa)) enclose the v-SNARE coiled-coil homology domain. Positions 92–116 (NLKMMIILGVICAIILIIIIVYFST) are required for interaction with SEPT8. The chain crosses the membrane as a helical; Anchor for type IV membrane protein span at residues 95 to 114 (MMIILGVICAIILIIIIVYF). Residues 115 to 116 (ST) are Vesicular-facing.

It belongs to the synaptobrevin family. As to quaternary structure, part of the SNARE core complex containing SNAP25, VAMP2 and STX1A; this complex constitutes the basic catalytic machinery of the complex neurotransmitter release apparatus. Recruited to the SNARE complex following binding of the SNARE complex component STX1A to STXBP1. This complex binds to CPLX1. Interacts with VAPA and VAPB. Interacts (via N-terminus) with KCNB1 (via N-terminus and C-terminus); stimulates the channel inactivation rate of KCNB1. Interacts with POPDC1 and STX4. Interacts with WDFY2, PRKCZ and PRKCI. Forms a complex with WDFY2 and PRKCZ. Interacts with SEPT8; the interaction inhibits interaction of VAMP2 with SYP. Interacts with SYP; the interaction is inhibited by interaction with SEPT8. Interacts with PICALM. Interacts with alpha-synuclein/SNCA. Interacts with STX3 isoform 3B. In terms of processing, phosphorylated by PRKCZ in vitro and this phosphorylation is increased in the presence of WDFY2. Post-translationally, (Microbial infection) Targeted and hydrolyzed by C.botulinum neurotoxin type B (BoNT/B, botB); 20 hours after treatment of spinal cord cells almost all the protein has been digested. BoNT/B hydrolyzes the 76-Gln-|-Phe-77 bond and inhibits neurotransmitter release. (Microbial infection) Targeted and hydrolyzed by C.tetani toxin (tetX); 20 hours after treatment of spinal cord cells almost all the protein has been digested. Tetanus toxin hydrolyzes the 76-Gln-|-Phe-77 bond and inhibits neurotransmitter release. As to expression, expressed in the outer plexiform layer of the retina (at protein level).

It is found in the cytoplasmic vesicle. The protein localises to the secretory vesicle. The protein resides in the synaptic vesicle membrane. Its subcellular location is the cell membrane. Its function is as follows. Involved in the targeting and/or fusion of transport vesicles to their target membrane. Major SNARE protein of synaptic vesicles which mediates fusion of synaptic vesicles to release neurotransmitters. Essential for fast vesicular exocytosis and activity-dependent neurotransmitter release as well as fast endocytosis that mediates rapid reuse of synaptic vesicles. Modulates the gating characteristics of the delayed rectifier voltage-dependent potassium channel KCNB1. This Mus musculus (Mouse) protein is Vesicle-associated membrane protein 2 (Vamp2).